The sequence spans 697 residues: T-related protein (697 aa).

Residues 1 to 60 (MTTSHILSAVDPTTGLSGNVSGGGGGGGAGGGAGSGSPQHVTHNGHGHGHGLGGVAAVSG) form a disordered region. Gly residues-rich tracts occupy residues 20–35 (VSGG…GAGS) and 50–60 (HGLGGVAAVSG). A DNA-binding region (T-box) is located at residues 96–264 (LWLRFQNLTN…YNPFAKAFLD (169 aa)). A compositionally biased stretch (low complexity) spans 316-330 (SVSSAESVGPSSGGS). Disordered stretches follow at residues 316 to 407 (SVSS…GGIG) and 462 to 488 (VCSG…TSSP). The span at 337–351 (SLSSRSVAPTRTTPY) shows a compositional bias: polar residues. Composition is skewed to low complexity over residues 352–373 (SRPR…SSTS), 381–401 (QTPT…VSSS), and 469–488 (SSHN…TSSP).

It is found in the nucleus. Its function is as follows. Required for the specification of the hindgut and anal pads. The polypeptide is T-related protein (byn) (Drosophila melanogaster (Fruit fly)).